The sequence spans 311 residues: MCVIMGDFTDLDRQIEQLRRCELIKENEVKALCAKAREILVEESNVQSVDSPVTVCGDIHGQFYDLKELFRVGGEVPETNYLFMGDFVDRGFYSVETFLLLLALKVRYPDRITLIRGNHESRQITQVYGFFDECHRKYGSATVWRYCTEIFDYLSLSAIVDGKIFCVHGGLSPSIQTLDQIRTIDRKQEVPHDGPMCDLLWSDPEDTTGWGVSPRGAGYLFGSDVVAQFNAANDISMICRAHQLVMEGYKWHFNDTVLTVWSAPNYCYRCGNVAAILELDEHLQKEFIIFEAAPQETRGLPSKKPVADYFL.

The Mn(2+) site is built by Asp-58, His-60, Asp-86, and Asn-118. Catalysis depends on His-119, which acts as the Proton donor. Mn(2+) contacts are provided by His-168 and His-242. Position 311 is a leucine methyl ester (Leu-311).

Belongs to the PPP phosphatase family. PP-4 (PP-X) subfamily. As to quaternary structure, serine/threonine-protein phosphatase 4 (PP4) occurs in different assemblies of the catalytic and one or more regulatory subunits. Mn(2+) serves as cofactor.

It is found in the cytoplasm. The protein resides in the cytoskeleton. Its subcellular location is the microtubule organizing center. It localises to the centrosome. It carries out the reaction O-phospho-L-seryl-[protein] + H2O = L-seryl-[protein] + phosphate. The enzyme catalyses O-phospho-L-threonyl-[protein] + H2O = L-threonyl-[protein] + phosphate. Protein phosphatase that regulates many processes such as microtubule organization at centrosomes. This Danio rerio (Zebrafish) protein is Serine/threonine-protein phosphatase 4 catalytic subunit A (ppp4ca).